The following is a 213-amino-acid chain: GTP-binding protein yptV4 (213 aa).

Position 13–21 (13–21 (GDTGVGKSC)) interacts with GTP. The Effector region motif lies at 35 to 43 (HDLTIGVEF). GTP contacts are provided by residues 61 to 65 (DTAGQ), 119 to 122 (NKCD), and 149 to 151 (SAR). Residues 194–213 (AGPQAAKPGEGDARKSSSCC) are disordered. The segment covering 202-213 (GEGDARKSSSCC) has biased composition (basic and acidic residues). S-geranylgeranyl cysteine attachment occurs at residues Cys212 and Cys213.

It belongs to the small GTPase superfamily. Rab family.

The protein localises to the cell membrane. Its function is as follows. Protein transport. Probably involved in vesicular traffic. In Volvox carteri (Green alga), this protein is GTP-binding protein yptV4 (YPTV4).